Here is a 504-residue protein sequence, read N- to C-terminus: 6,7,8-trihydroxycoumarin synthase (504 aa).

The chain crosses the membrane as a helical span at residues 1-21 (MEPVFLFLILAFPIASVYLLF). Positions 363-368 (PAPVLV) are substrate specificity. Cysteine 444 contributes to the heme binding site.

Belongs to the cytochrome P450 family. Heme is required as a cofactor.

It is found in the microsome membrane. It participates in secondary metabolite biosynthesis. In terms of biological role, involved in the biosynthesis of coumarins and furanocoumarins (FCs), natural products required for defense responses against attacks by predators with potential medical and agroindustrial usages such as anticoagulant, rodenticide and artificial vanilla substitutes. Able to catalyze the hydroxylation of esculetin to produce 6,7,8-trihydroxycoumarin. This chain is 6,7,8-trihydroxycoumarin synthase, found in Pastinaca sativa (Wild parsnip).